A 338-amino-acid chain; its full sequence is 1-aminocyclopropane-1-carboxylate deaminase (338 aa).

K51 is modified (N6-(pyridoxal phosphate)lysine). The active-site Nucleophile is S78.

This sequence belongs to the ACC deaminase/D-cysteine desulfhydrase family. In terms of assembly, homotrimer. Pyridoxal 5'-phosphate is required as a cofactor.

It carries out the reaction 1-aminocyclopropane-1-carboxylate + H2O = 2-oxobutanoate + NH4(+). Functionally, catalyzes a cyclopropane ring-opening reaction, the irreversible conversion of 1-aminocyclopropane-1-carboxylate (ACC) to ammonia and alpha-ketobutyrate. Allows growth on ACC as a nitrogen source. The chain is 1-aminocyclopropane-1-carboxylate deaminase from Ralstonia pickettii (strain 12J).